Here is a 325-residue protein sequence, read N- to C-terminus: ATP phosphoribosyltransferase (325 aa).

The protein belongs to the ATP phosphoribosyltransferase family. Long subfamily. Mg(2+) is required as a cofactor.

The protein localises to the cytoplasm. The catalysed reaction is 1-(5-phospho-beta-D-ribosyl)-ATP + diphosphate = 5-phospho-alpha-D-ribose 1-diphosphate + ATP. The protein operates within amino-acid biosynthesis; L-histidine biosynthesis; L-histidine from 5-phospho-alpha-D-ribose 1-diphosphate: step 1/9. Its activity is regulated as follows. Feedback inhibited by histidine. Functionally, catalyzes the condensation of ATP and 5-phosphoribose 1-diphosphate to form N'-(5'-phosphoribosyl)-ATP (PR-ATP). Has a crucial role in the pathway because the rate of histidine biosynthesis seems to be controlled primarily by regulation of HisG enzymatic activity. In Nitrobacter winogradskyi (strain ATCC 25391 / DSM 10237 / CIP 104748 / NCIMB 11846 / Nb-255), this protein is ATP phosphoribosyltransferase.